A 102-amino-acid chain; its full sequence is MDIQRVKRLLSITNDKHDEYLTEMVPLLVEFAKDECHNPFIDKDGNESIPSGVLIFVAKAAQFYMTNAGLTGRSMDTVSYNFATEIPSTILKKLNPYRKMAR.

It belongs to the Caudoviricetes gp6/gp15 head completion protein family. Homododecamer. Interacts with the stopper protein gp16. Interacts with the portal protein; this interaction occurs at the end of the packaging when the terminase complex is replaced by the connector.

It localises to the virion. Head completion protein that exhibits an open central channel for viral DNA ejection. Part of the head-tail connector by binding to the portal protein and to the head completion protein 16. In Bacillus phage SPP1 (Bacteriophage SPP1), this protein is Head completion protein gp15.